A 174-amino-acid polypeptide reads, in one-letter code: Male-enhanced antigen 1 (174 aa).

Disordered regions lie at residues 1–77 and 94–123; these read MAAV…PVGD and LHLP…IPMD. Composition is skewed to acidic residues over residues 38–48, 65–77, and 101–110; these read SSEEPEEEQEE, PEQE…PVGD, and LESEDEDEEG. Phosphoserine is present on Ser-103.

In terms of biological role, may play an important role in spermatogenesis and/or testis development. The protein is Male-enhanced antigen 1 (MEA1) of Sus scrofa (Pig).